Reading from the N-terminus, the 381-residue chain is Putative F-box/kelch-repeat protein At3g17570 (381 aa).

The 45-residue stretch at 1 to 45 (MFTDLPRDLETEILSRVPATSLQKLKPTCKRWYTLFKDPEFLKKH) folds into the F-box domain. 3 Kelch repeats span residues 151–199 (SYKI…TLKG), 229–281 (LLYQ…KIVE), and 331–379 (RFYI…GGKR).

The sequence is that of Putative F-box/kelch-repeat protein At3g17570 from Arabidopsis thaliana (Mouse-ear cress).